Consider the following 410-residue polypeptide: Lipoyl synthase, mitochondrial (410 aa).

7 residues coordinate [4Fe-4S] cluster: Cys125, Cys130, Cys136, Cys157, Cys161, Cys164, and Ser373. A Radical SAM core domain is found at Ser140–Leu362.

The protein belongs to the radical SAM superfamily. Lipoyl synthase family. [4Fe-4S] cluster is required as a cofactor.

The protein localises to the mitochondrion. The catalysed reaction is [[Fe-S] cluster scaffold protein carrying a second [4Fe-4S](2+) cluster] + N(6)-octanoyl-L-lysyl-[protein] + 2 oxidized [2Fe-2S]-[ferredoxin] + 2 S-adenosyl-L-methionine + 4 H(+) = [[Fe-S] cluster scaffold protein] + N(6)-[(R)-dihydrolipoyl]-L-lysyl-[protein] + 4 Fe(3+) + 2 hydrogen sulfide + 2 5'-deoxyadenosine + 2 L-methionine + 2 reduced [2Fe-2S]-[ferredoxin]. Its pathway is protein modification; protein lipoylation via endogenous pathway; protein N(6)-(lipoyl)lysine from octanoyl-[acyl-carrier-protein]: step 2/2. Catalyzes the radical-mediated insertion of two sulfur atoms into the C-6 and C-8 positions of the octanoyl moiety bound to the lipoyl domains of lipoate-dependent enzymes, thereby converting the octanoylated domains into lipoylated derivatives. In Leishmania major, this protein is Lipoyl synthase, mitochondrial.